The chain runs to 195 residues: 3-isopropylmalate dehydratase small subunit (195 aa).

Belongs to the LeuD family. LeuD type 1 subfamily. Heterodimer of LeuC and LeuD.

It catalyses the reaction (2R,3S)-3-isopropylmalate = (2S)-2-isopropylmalate. The protein operates within amino-acid biosynthesis; L-leucine biosynthesis; L-leucine from 3-methyl-2-oxobutanoate: step 2/4. Catalyzes the isomerization between 2-isopropylmalate and 3-isopropylmalate, via the formation of 2-isopropylmaleate. The chain is 3-isopropylmalate dehydratase small subunit from Frankia casuarinae (strain DSM 45818 / CECT 9043 / HFP020203 / CcI3).